The primary structure comprises 214 residues: Adenylate kinase (214 aa).

An ATP-binding site is contributed by 10-15 (GAGKGT). Positions 30-59 (STGDMLRAAIKAGSELGQKAKILMDMGQLV) are NMP. AMP-binding positions include T31, R36, 57–59 (QLV), 85–88 (GFPR), and Q92. Positions 122-159 (GRRVHPASGRTYHIVYNPPKVEDKDDITGEDLILRADD) are LID. ATP contacts are provided by residues R123 and 132–133 (TY). AMP contacts are provided by R156 and R167. Q200 serves as a coordination point for ATP.

This sequence belongs to the adenylate kinase family. Monomer.

The protein localises to the cytoplasm. The catalysed reaction is AMP + ATP = 2 ADP. Its pathway is purine metabolism; AMP biosynthesis via salvage pathway; AMP from ADP: step 1/1. In terms of biological role, catalyzes the reversible transfer of the terminal phosphate group between ATP and AMP. Plays an important role in cellular energy homeostasis and in adenine nucleotide metabolism. This chain is Adenylate kinase, found in Histophilus somni (strain 129Pt) (Haemophilus somnus).